The primary structure comprises 440 residues: tRNA-2-methylthio-N(6)-dimethylallyladenosine synthase (440 aa).

The MTTase N-terminal domain maps to 2–118 (PKYYIITYGC…LPKILESLDG (117 aa)). C11, C47, C81, C155, C159, and C162 together coordinate [4Fe-4S] cluster. Residues 141–370 (RENKFQAWIP…ENLQRKIIYE (230 aa)) enclose the Radical SAM core domain. The region spanning 373-436 (LSRVGKEEIV…LWSLKGEVIR (64 aa)) is the TRAM domain.

The protein belongs to the methylthiotransferase family. MiaB subfamily. In terms of assembly, monomer. [4Fe-4S] cluster serves as cofactor.

It is found in the cytoplasm. It carries out the reaction N(6)-dimethylallyladenosine(37) in tRNA + (sulfur carrier)-SH + AH2 + 2 S-adenosyl-L-methionine = 2-methylsulfanyl-N(6)-dimethylallyladenosine(37) in tRNA + (sulfur carrier)-H + 5'-deoxyadenosine + L-methionine + A + S-adenosyl-L-homocysteine + 2 H(+). Catalyzes the methylthiolation of N6-(dimethylallyl)adenosine (i(6)A), leading to the formation of 2-methylthio-N6-(dimethylallyl)adenosine (ms(2)i(6)A) at position 37 in tRNAs that read codons beginning with uridine. This chain is tRNA-2-methylthio-N(6)-dimethylallyladenosine synthase, found in Dictyoglomus thermophilum (strain ATCC 35947 / DSM 3960 / H-6-12).